The chain runs to 120 residues: Ribonuclease P protein component 4 (120 aa).

The Zn(2+) site is built by C68, C71, C97, and C100.

Belongs to the eukaryotic/archaeal RNase P protein component 4 family. Consists of a catalytic RNA component and at least 5 protein subunits. Forms a heterodimeric subcomplex with Rnp1. Reconstituted enzyme missing individual protein subunits is suboptimally active, showing each subunit contributes to optimization of activity. Requires Zn(2+) as cofactor.

It localises to the cytoplasm. The enzyme catalyses Endonucleolytic cleavage of RNA, removing 5'-extranucleotides from tRNA precursor.. In terms of biological role, part of ribonuclease P, a protein complex that generates mature tRNA molecules by cleaving their 5'-ends. Binds RNase P RNA. The chain is Ribonuclease P protein component 4 from Pyrococcus horikoshii (strain ATCC 700860 / DSM 12428 / JCM 9974 / NBRC 100139 / OT-3).